Consider the following 289-residue polypeptide: Cyclin-dependent kinase 2 homolog (289 aa).

The Protein kinase domain maps to 4–285; sequence YHGLEKIGEG…AKQAIEHPYF (282 aa). Residues 10–18 and Lys32 each bind ATP; that span reads IGEGTYGVV. At Thr14 the chain carries Phosphothreonine. Position 15 is a phosphotyrosine (Tyr15). The active-site Proton acceptor is Asp126. The residue at position 159 (Thr159) is a Phosphothreonine.

The protein belongs to the protein kinase superfamily. CMGC Ser/Thr protein kinase family. CDC2/CDKX subfamily. In terms of assembly, may form a complex composed of at least the catalytic subunit CRK2 and a cyclin. Mg(2+) is required as a cofactor.

The protein resides in the cytoplasm. The enzyme catalyses L-seryl-[protein] + ATP = O-phospho-L-seryl-[protein] + ADP + H(+). The catalysed reaction is L-threonyl-[protein] + ATP = O-phospho-L-threonyl-[protein] + ADP + H(+). It catalyses the reaction [DNA-directed RNA polymerase] + ATP = phospho-[DNA-directed RNA polymerase] + ADP + H(+). With respect to regulation, phosphorylation at Thr-14 or Tyr-15 inactivates the enzyme, while phosphorylation at Thr-159 activates it. Its function is as follows. Serine/threonine-protein kinase. Involved in the control of the cell cycle. Required for entry into S-phase and mitosis. Probable component of the kinase complex that phosphorylates the repetitive C-terminus of RNA polymerase II. The polypeptide is Cyclin-dependent kinase 2 homolog (Plasmodium yoelii yoelii).